The primary structure comprises 227 residues: Ribonuclease 3 (227 aa).

Residues 6 to 128 (ASDYQQRIGY…VIAAIYLDAD (123 aa)) enclose the RNase III domain. A Mg(2+)-binding site is contributed by Glu-41. Residue Asp-45 is part of the active site. Asp-114 and Glu-117 together coordinate Mg(2+). Residue Glu-117 is part of the active site. A DRBM domain is found at 155-225 (DPKTRLQEWL…ASHAIDQLDS (71 aa)). Residues 203-212 (GEGSSRRLAE) are compositionally biased toward basic and acidic residues. Positions 203 to 227 (GEGSSRRLAEQDAASHAIDQLDSNK) are disordered.

This sequence belongs to the ribonuclease III family. In terms of assembly, homodimer. Mg(2+) serves as cofactor.

The protein resides in the cytoplasm. The catalysed reaction is Endonucleolytic cleavage to 5'-phosphomonoester.. In terms of biological role, digests double-stranded RNA. Involved in the processing of primary rRNA transcript to yield the immediate precursors to the large and small rRNAs (23S and 16S). Processes some mRNAs, and tRNAs when they are encoded in the rRNA operon. Processes pre-crRNA and tracrRNA of type II CRISPR loci if present in the organism. The chain is Ribonuclease 3 from Xylella fastidiosa (strain M23).